The following is a 1029-amino-acid chain: Probable E3 ubiquitin protein ligase C167.07c (1029 aa).

Residues A46 to I75 enclose the IQ domain. Positions F692 to S1029 constitute an HECT domain. C997 functions as the Glycyl thioester intermediate in the catalytic mechanism.

Its subcellular location is the cytoplasm. The protein localises to the nucleus. It carries out the reaction S-ubiquitinyl-[E2 ubiquitin-conjugating enzyme]-L-cysteine + [acceptor protein]-L-lysine = [E2 ubiquitin-conjugating enzyme]-L-cysteine + N(6)-ubiquitinyl-[acceptor protein]-L-lysine.. Its function is as follows. Probable E3 ubiquitin-protein ligase which mediates ubiquitination and subsequent proteasomal degradation of target proteins. The protein is Probable E3 ubiquitin protein ligase C167.07c of Schizosaccharomyces pombe (strain 972 / ATCC 24843) (Fission yeast).